The primary structure comprises 379 residues: MCYYISILIYWGADCRTVGTGPVLMYCTKTIRSYFRCRHPFFSSINSSQIFFLSLLIAGECMFIPSAWPRVSTFHRLFIPALALLPYVFLYASVVTKSYITHENHEDEMARYPYDRVIFNPGHRCRTCDFLKPARSKHCSFCKACVSRHDHHCVWLTNCVGRNNYHYFLSLLLSLSLMLAYGSWLGFSLVSQTLEGLIPSSSPLRSKSQDWTTWLNVWAIAIASDIRVGAVAMLTAMTAPLAMAFLLYHTYLIWAGMTTNESAKWSDWKEDVADGLVFKSTRSEIYGNQSHSDEDTPAQRTWPVSSNQILVITDGEPPKEGFQLCSRSNEILQKDDPQAPVDTRWTEVNSMREIDNIYDLGFWDNLREVFHMPIRRCVR.

The Lumenal segment spans residues 1-4; sequence MCYY. The chain crosses the membrane as a helical span at residues 5–25; that stretch reads ISILIYWGADCRTVGTGPVLM. The Cytoplasmic portion of the chain corresponds to 26–48; that stretch reads YCTKTIRSYFRCRHPFFSSINSS. A helical transmembrane segment spans residues 49 to 69; the sequence is QIFFLSLLIAGECMFIPSAWP. Over 70-76 the chain is Lumenal; sequence RVSTFHR. Residues 77 to 97 form a helical membrane-spanning segment; the sequence is LFIPALALLPYVFLYASVVTK. Residues 98–166 are Cytoplasmic-facing; the sequence is SYITHENHED…TNCVGRNNYH (69 aa). Residues 123-173 enclose the DHHC domain; the sequence is HRCRTCDFLKPARSKHCSFCKACVSRHDHHCVWLTNCVGRNNYHYFLSLLL. Catalysis depends on Cys-153, which acts as the S-palmitoyl cysteine intermediate. The helical transmembrane segment at 167-187 threads the bilayer; sequence YFLSLLLSLSLMLAYGSWLGF. The Lumenal segment spans residues 188 to 227; the sequence is SLVSQTLEGLIPSSSPLRSKSQDWTTWLNVWAIAIASDIR. The chain crosses the membrane as a helical span at residues 228–248; the sequence is VGAVAMLTAMTAPLAMAFLLY. Over 249–379 the chain is Cytoplasmic; it reads HTYLIWAGMT…FHMPIRRCVR (131 aa).

This sequence belongs to the DHHC palmitoyltransferase family. SWF1 subfamily.

It is found in the endoplasmic reticulum membrane. It catalyses the reaction L-cysteinyl-[protein] + hexadecanoyl-CoA = S-hexadecanoyl-L-cysteinyl-[protein] + CoA. Palmitoyltransferase that targets several endosomal SNAREs. Palmitoylates the SNAREs at cysteine residues close to the cytoplasmic end of their transmembrane domain. May have a role in the cellular quality control of transmembrane domain-containing proteins. In Aspergillus fumigatus (strain ATCC MYA-4609 / CBS 101355 / FGSC A1100 / Af293) (Neosartorya fumigata), this protein is Palmitoyltransferase swf1 (swf1).